The chain runs to 207 residues: Protein Nef (207 aa).

The N-myristoyl glycine; by host moiety is linked to residue Gly-2. Ser-6 bears the Phosphoserine; by host mark. The acidic; interacts with host PACS1 and PACS2; stabilizes the interaction of NEF/MHC-I with host AP1M1; necessary for MHC-I internalization stretch occupies residues 63-66; the sequence is EEZE. The tract at residues 70–79 is SH3-binding; interaction with Src family tyrosine kinases; sequence PVRPQVPLRP. Residues 73–76 carry the PxxP; stabilizes the interaction of NEF/MHC-I with host AP1M1; necessary for MHC-I internalization motif; it reads PQVP. Residues 109–125 are mediates dimerization, Nef-PTE1 interaction; it reads EILDLWVYHTQGFFPDW. Residues 149–181 form a binding to ATP6V1H region; sequence LSEEAVEEANEGDNNALLHPICQHGVDDDHKQV. Positions 165-166 match the Dileucine internalization motif; necessary for CD4 internalization motif; sequence LL. The short motif at 175–176 is the Diacidic; necessary for CD4 internalization element; the sequence is DD.

Belongs to the lentivirus primate group Nef protein family. Monomer; cytosolic form. Homodimer; membrane bound form. Interacts with Nef associated p21-activated kinase (PAK2); this interaction activates PAK2. Associates with the Nef-MHC-I-AP1 complex; this complex is required for MHC-I internalization. Interacts (via C-terminus) with host PI3-kinase. Interacts with host PACS1; this interaction seems to be weak. Interacts with host PACS2. Interacts with host LCK and MAPK3; these interactions inhibit the kinase activity of the latter. Interacts with host ATP6V1H; this interaction may play a role in CD4 endocytosis. Associates with the CD4-Nef-AP2 complex; this complex is required for CD4 internalization. Interacts with host AP2 subunit alpha and AP2 subunit sigma2. Interacts with TCR-zeta chain; this interaction up-regulates the Fas ligand (FasL) surface expression. Interacts with host HCK, LYN, and SRC; these interactions activate the Src family kinases. Interacts with MAP3K5; this interaction inhibits the Fas and TNFR-mediated death signals. Interacts with beta-COP and PTE1. Interacts with human RACK1; this increases Nef phosphorylation by PKC. Interacts with TP53; this interaction decreases the half-life of TP53, protecting the infected cell against p53-mediated apoptosis. In terms of processing, the virion-associated Nef proteins are cleaved by the viral protease to release the soluble C-terminal core protein. Nef is probably cleaved concomitantly with viral structural proteins on maturation of virus particles. Myristoylated. Post-translationally, phosphorylated on serine residues, probably by host PKCdelta and theta.

Its subcellular location is the host cell membrane. It is found in the virion. The protein localises to the secreted. It localises to the host Golgi apparatus membrane. Factor of infectivity and pathogenicity, required for optimal virus replication. Alters numerous pathways of T-lymphocyte function and down-regulates immunity surface molecules in order to evade host defense and increase viral infectivity. Alters the functionality of other immunity cells, like dendritic cells, monocytes/macrophages and NK cells. Functionally, in infected CD4(+) T-lymphocytes, down-regulates the surface MHC-I, mature MHC-II, CD4, CD28, CCR5 and CXCR4 molecules. Mediates internalization and degradation of host CD4 through the interaction of with the cytoplasmic tail of CD4, the recruitment of AP-2 (clathrin adapter protein complex 2), internalization through clathrin coated pits, and subsequent transport to endosomes and lysosomes for degradation. Diverts host MHC-I molecules to the trans-Golgi network-associated endosomal compartments by an endocytic pathway to finally target them for degradation. MHC-I down-regulation may involve AP-1 (clathrin adapter protein complex 1) or possibly Src family kinase-ZAP70/Syk-PI3K cascade recruited by PACS2. In consequence infected cells are masked for immune recognition by cytotoxic T-lymphocytes. Decreasing the number of immune receptors also prevents reinfection by more HIV particles (superinfection). Down-regulates host SERINC3 and SERINC5 thereby excluding these proteins from the viral particles. Virion infectivity is drastically higher when SERINC3 or SERINC5 are excluded from the viral envelope, because these host antiviral proteins impair the membrane fusion event necessary for subsequent virion penetration. In terms of biological role, bypasses host T-cell signaling by inducing a transcriptional program nearly identical to that of anti-CD3 cell activation. Interaction with TCR-zeta chain up-regulates the Fas ligand (FasL). Increasing surface FasL molecules and decreasing surface MHC-I molecules on infected CD4(+) cells send attacking cytotoxic CD8+ T-lymphocytes into apoptosis. Its function is as follows. Plays a role in optimizing the host cell environment for viral replication without causing cell death by apoptosis. Protects the infected cells from apoptosis in order to keep them alive until the next virus generation is ready to strike. Inhibits the Fas and TNFR-mediated death signals by blocking MAP3K5/ASK1. Decreases the half-life of TP53, protecting the infected cell against p53-mediated apoptosis. Inhibits the apoptotic signals regulated by the Bcl-2 family proteins through the formation of a Nef/PI3-kinase/PAK2 complex that leads to activation of PAK2 and induces phosphorylation of host BAD. Extracellular Nef protein targets CD4(+) T-lymphocytes for apoptosis by interacting with CXCR4 surface receptors. The chain is Protein Nef from Homo sapiens (Human).